A 354-amino-acid polypeptide reads, in one-letter code: Guanine nucleotide-binding protein G(i) subunit alpha-3 (354 aa).

A lipid anchor (N-myristoyl glycine) is attached at glycine 2. Cysteine 3 carries S-palmitoyl cysteine lipidation. In terms of domain architecture, G-alpha spans 32–354 (KEVKLLLLGA…KNNLKECGLY (323 aa)). Residues 35-48 (KLLLLGAGESGKST) form a G1 motif region. GTP contacts are provided by glycine 42, glutamate 43, serine 44, glycine 45, lysine 46, serine 47, threonine 48, aspartate 150, serine 151, leucine 175, arginine 176, threonine 177, arginine 178, valine 179, lysine 180, threonine 181, valine 201, glycine 203, asparagine 269, lysine 270, aspartate 272, leucine 273, cysteine 325, alanine 326, and threonine 327. Position 47 (serine 47) interacts with Mg(2+). Positions 173 to 181 (DVLRTRVKT) are G2 motif. Threonine 181 contacts Mg(2+). The interval 196–205 (FKMFDVGGQR) is G3 motif. Positions 265 to 272 (ILFLNKKD) are G4 motif. The tract at residues 324-329 (TCATDT) is G5 motif.

Belongs to the G-alpha family. G(i/o/t/z) subfamily. In terms of assembly, heterotrimeric G proteins are composed of 3 units; alpha, beta and gamma. The alpha subunit contains the guanine nucleotide binding site. GTP binding causes dissociation of the heterotrimer, liberating the individual subunits so that they can interact with downstream effector proteins. Forms a complex with CCDC88A/GIV and EGFR which leads to enhanced EGFR signaling and triggering of cell migration; ligand stimulation is required for recruitment of GNAI3 to the complex. Interacts (inactive GDP-bound form) with CCDC88A/GIV (via GBA motif); the interaction leads to activation of GNAI3. Interacts (inactive GDP-bound form) with CCDC88C/DAPLE (via GBA motif); the interaction leads to activation of GNAI3. Interacts (inactive GDP-bound form) with NUCB1 (via GBA motif) and NUCB2 (via GBA motif); the interaction leads to activation of GNAI3. Interacts (inactive GDP-bound form) with PLCD4 (via GBA motif); the interaction leads to activation of GNAI3. Interacts with INSR; the interaction is probably mediated by CCDC88A/GIV. Interacts with GPSM1. Interacts (GDP-bound form) with GPSM2 (via GoLoco domains). Does not interact with RGS2. Interacts with RGS8 and RGS10; this strongly enhances the intrinsic GTPase activity. Interacts with RGS16; this strongly enhances the intrinsic GTPase activity. Interacts with RGS12. Interacts (via active GTP- or inactive GDP-bound form) with RGS14. Interacts (via active GTP-bound form) with TRPC5 (via ANK repeats) in a homotetrameric ion channel; the interaction is direct and activates the channel activity.

It is found in the cytoplasm. The protein resides in the cell membrane. The protein localises to the cytoskeleton. Its subcellular location is the microtubule organizing center. It localises to the centrosome. Functionally, heterotrimeric guanine nucleotide-binding proteins (G proteins) function as transducers downstream of G protein-coupled receptors (GPCRs) in numerous signaling cascades. The alpha chain contains the guanine nucleotide binding site and alternates between an active, GTP-bound state and an inactive, GDP-bound state. Signaling by an activated GPCR promotes GDP release and GTP binding. The alpha subunit has a low GTPase activity that converts bound GTP to GDP, thereby terminating the signal. Both GDP release and GTP hydrolysis are modulated by numerous regulatory proteins. Signaling is mediated via effector proteins, such as adenylate cyclase. Inhibits adenylate cyclase activity, leading to decreased intracellular cAMP levels. Stimulates the activity of receptor-regulated K(+) channels. The active GTP-bound form prevents the association of RGS14 with centrosomes and is required for the translocation of RGS14 from the cytoplasm to the plasma membrane. May play a role in cell division. The active GTP-bound form activates the calcium permeant TRPC5 ion channels. The chain is Guanine nucleotide-binding protein G(i) subunit alpha-3 (Gnai3) from Mus musculus (Mouse).